A 201-amino-acid polypeptide reads, in one-letter code: Small ribosomal subunit protein uS4c (201 aa).

The 64-residue stretch at 89–152 (MRLDNILFRL…NSRTLVQNLL (64 aa)) folds into the S4 RNA-binding domain.

It belongs to the universal ribosomal protein uS4 family. Part of the 30S ribosomal subunit. Contacts protein S5. The interaction surface between S4 and S5 is involved in control of translational fidelity.

The protein localises to the plastid. Its subcellular location is the chloroplast. Its function is as follows. One of the primary rRNA binding proteins, it binds directly to 16S rRNA where it nucleates assembly of the body of the 30S subunit. Functionally, with S5 and S12 plays an important role in translational accuracy. In Arabidopsis thaliana (Mouse-ear cress), this protein is Small ribosomal subunit protein uS4c (rps4).